A 322-amino-acid polypeptide reads, in one-letter code: Deoxyhypusine hydroxylase (322 aa).

HEAT-like PBS-type repeat units lie at residues 76-102 (LKHE…VMLD), 109-135 (VRHE…SRRE), 234-260 (FKHE…VLKR), and 267-293 (VRHE…HLQD). His-78, Glu-79, His-111, Glu-112, His-236, Glu-237, His-269, and Glu-270 together coordinate Fe cation.

Belongs to the deoxyhypusine hydroxylase family. It depends on Fe(2+) as a cofactor.

It localises to the cytoplasm. The protein localises to the nucleus. It carries out the reaction [eIF5A protein]-deoxyhypusine + AH2 + O2 = [eIF5A protein]-hypusine + A + H2O. It participates in protein modification; eIF5A hypusination. Functionally, catalyzes the hydroxylation of the N(6)-(4-aminobutyl)-L-lysine intermediate to form hypusine, an essential post-translational modification only found in mature eIF-5A factor. The protein is Deoxyhypusine hydroxylase of Eremothecium gossypii (strain ATCC 10895 / CBS 109.51 / FGSC 9923 / NRRL Y-1056) (Yeast).